A 211-amino-acid chain; its full sequence is Ribonuclease HII (211 aa).

An RNase H type-2 domain is found at 11 to 200 (EFIAGVDEVG…VKKLLSTLLS (190 aa)). Asp-17, Glu-18, and Asp-109 together coordinate a divalent metal cation.

The protein belongs to the RNase HII family. Mn(2+) serves as cofactor. Requires Mg(2+) as cofactor.

Its subcellular location is the cytoplasm. The enzyme catalyses Endonucleolytic cleavage to 5'-phosphomonoester.. Endonuclease that specifically degrades the RNA of RNA-DNA hybrids. The polypeptide is Ribonuclease HII (Histophilus somni (strain 2336) (Haemophilus somnus)).